A 284-amino-acid chain; its full sequence is MKLVIVSGRSGSGKSVALRVLEDLGYYCVDNLPLPLIGSLLEQLKGSNDLVAISVDVRNLPEQDKVLVKQLTSLPEGTELTSFFLNSSDKVLLKRYSETRRLHPLSKSRVSLQEAIKLEGKLLEPLSQQMDHYIDTSNLNIYELSDQVRQILLGSVDKELVINFESFGFKHGMPTEADFMFDVRFLPNPHWEPELRPLTGLDEPVAEFLNRQPLVNKFIWQIENLLETWLPHLERNNRSYLTIAIGCTGGQHRSVYVAEQLAKRFSNGKHKVNARHRELSHAKA.

8–15 contributes to the ATP binding site; that stretch reads GRSGSGKS. A GTP-binding site is contributed by 56 to 59; it reads DVRN.

Belongs to the RapZ-like family.

Its function is as follows. Displays ATPase and GTPase activities. The polypeptide is Nucleotide-binding protein Shewmr4_0670 (Shewanella sp. (strain MR-4)).